Reading from the N-terminus, the 477-residue chain is Cytoplasmic 60S subunit biogenesis factor ZNF622 (477 aa).

N-acetylalanine is present on Ala-2. 2 U1-type zinc fingers span residues 4–28 (YTCI…TDWH) and 67–91 (TYCT…SRRH). The interval 135–212 (AIKAQPSMSP…EDLDGDDWED (78 aa)) is disordered. Over residues 167–178 (GTHDRDPSEKPP) the composition is skewed to basic and acidic residues. Positions 196-212 (EDSEEEEEDLDGDDWED) are enriched in acidic residues. Ser-276 carries the post-translational modification Phosphoserine.

This sequence belongs to the REI1 family. In terms of assembly, homo- and heterodimer. Associates with pre-60S ribosomal particles. Interacts with MELK and MYBL2. Interacts with DNAJC21. In terms of processing, phosphorylated by MELK. The phosphorylation may redirect the protein to the nucleus. Post-translationally, ubiquitinated by HECTD1, leading to its degradation. Expressed in lung, kidney, spleen, liver and brain with lowest expression in kidney.

The protein resides in the cytoplasm. The protein localises to the nucleus. Pre-60S-associated cytoplasmic factor involved in the cytoplasmic maturation of the 60S subunit. The chain is Cytoplasmic 60S subunit biogenesis factor ZNF622 from Homo sapiens (Human).